A 332-amino-acid polypeptide reads, in one-letter code: 30 kDa heat shock protein (332 aa).

The Extracellular segment spans residues 1–34; the sequence is MNDTLSSFLNRNEALGLNPPHGLDMHITKRGSDW. Residues 35 to 55 form a helical membrane-spanning segment; that stretch reads LWAVFAVFGFILLCYVVMFFI. The Cytoplasmic portion of the chain corresponds to 56 to 65; the sequence is AENKGSRLTR. The helical transmembrane segment at 66-86 threads the bilayer; sequence YALAPAFLITFFEFFAFFTYA. The Extracellular portion of the chain corresponds to 87-121; sequence SDLGWTGVQAEFNHVKVSKSITGEVPGIRQIFYSK. Residues 122-142 form a helical membrane-spanning segment; sequence YIAWFLSWPCLLFLIELAAST. Over 143-157 the chain is Cytoplasmic; sequence TGENDDISALDMVHS. The chain crosses the membrane as a helical span at residues 158 to 178; sequence LLIQIVGTLFWVVSLLVGSLI. Over 179-181 the chain is Extracellular; the sequence is KST. The chain crosses the membrane as a helical span at residues 182–202; it reads YKWGYYTIGAVAMLVTQGVIC. The Cytoplasmic segment spans residues 203 to 215; it reads QRQFFNLKTRGFN. The helical transmembrane segment at 216–236 threads the bilayer; sequence ALMLCTCMVIVWLYFICWGLS. Over 237–248 the chain is Extracellular; sequence DGGNRIQPDGEA. Residues 249–269 traverse the membrane as a helical segment; sequence IFYGVLDLCVFAIYPCYLLIA. Topologically, residues 270 to 332 are cytoplasmic; it reads VSRDGKLPRL…EAEQAVEDTA (63 aa). Positions 290–332 are disordered; it reads ATDDVEDAAPETKEAVPESPRASGETAIHEPEPEAEQAVEDTA. At Ser308 the chain carries Phosphoserine. Over residues 322–332 the composition is skewed to acidic residues; sequence PEAEQAVEDTA. Residue Thr331 is modified to Phosphothreonine.

Belongs to the archaeal/bacterial/fungal opsin family.

The protein resides in the membrane. In terms of biological role, probably cooperates with other heat shock proteins in the translocation of polypeptides through membranes. It may counteract the altering effect of heat shock on the plasma membrane. This Saccharomyces cerevisiae (strain ATCC 204508 / S288c) (Baker's yeast) protein is 30 kDa heat shock protein (HSP30).